The chain runs to 548 residues: Copine-2 (548 aa).

2 consecutive C2 domains span residues 6–131 (DGGA…TRPL) and 138–263 (PAGK…PLEI). 11 residues coordinate Ca(2+): Asp39, Asp45, Asp97, Asp99, Ser102, Asp109, Asp170, Asp176, Asp232, Asp234, and Asp240. Positions 247 to 304 (TSVLQMSEARDGVPLEIECINPKKQRKKKSYKNSGIIILRSCKIHRNYSFLDYILGGC) are linker region. A VWFA domain is found at 305 to 507 (QLMFTVGIDF…AARDIVQFVP (203 aa)).

It belongs to the copine family. Requires Ca(2+) as cofactor.

Its subcellular location is the cytoplasm. It localises to the nucleus. It is found in the cell membrane. Calcium-dependent phospholipid-binding protein that plays a role in calcium-mediated intracellular processes. Exhibits calcium-dependent cell membrane binding properties. This is Copine-2 from Mus musculus (Mouse).